The chain runs to 334 residues: BTB and MATH domain-containing protein 39 (334 aa).

An MATH domain is found at I14–L141. The BTB domain maps to A164–V229.

In Caenorhabditis elegans, this protein is BTB and MATH domain-containing protein 39 (bath-39).